A 381-amino-acid chain; its full sequence is Queuine tRNA-ribosyltransferase (381 aa).

The active-site Proton acceptor is the D92. Substrate-binding positions include 92-96 (DSGGF), D146, Q190, and G217. The segment at 248–254 (GVGRPED) is RNA binding. D267 acts as the Nucleophile in catalysis. Residues 272 to 276 (TRNAR) form an RNA binding; important for wobble base 34 recognition region. Residues C305, C307, C310, and H337 each contribute to the Zn(2+) site.

This sequence belongs to the queuine tRNA-ribosyltransferase family. In terms of assembly, homodimer. Within each dimer, one monomer is responsible for RNA recognition and catalysis, while the other monomer binds to the replacement base PreQ1. Zn(2+) serves as cofactor.

The enzyme catalyses 7-aminomethyl-7-carbaguanine + guanosine(34) in tRNA = 7-aminomethyl-7-carbaguanosine(34) in tRNA + guanine. Its pathway is tRNA modification; tRNA-queuosine biosynthesis. Its function is as follows. Catalyzes the base-exchange of a guanine (G) residue with the queuine precursor 7-aminomethyl-7-deazaguanine (PreQ1) at position 34 (anticodon wobble position) in tRNAs with GU(N) anticodons (tRNA-Asp, -Asn, -His and -Tyr). Catalysis occurs through a double-displacement mechanism. The nucleophile active site attacks the C1' of nucleotide 34 to detach the guanine base from the RNA, forming a covalent enzyme-RNA intermediate. The proton acceptor active site deprotonates the incoming PreQ1, allowing a nucleophilic attack on the C1' of the ribose to form the product. After dissociation, two additional enzymatic reactions on the tRNA convert PreQ1 to queuine (Q), resulting in the hypermodified nucleoside queuosine (7-(((4,5-cis-dihydroxy-2-cyclopenten-1-yl)amino)methyl)-7-deazaguanosine). The protein is Queuine tRNA-ribosyltransferase of Xanthomonas euvesicatoria pv. vesicatoria (strain 85-10) (Xanthomonas campestris pv. vesicatoria).